Reading from the N-terminus, the 345-residue chain is tRNA N6-adenosine threonylcarbamoyltransferase (345 aa).

The Fe cation site is built by H109 and H113. Residues T136–G140, D169, G182, D186, and N284 each bind substrate. D312 contacts Fe cation.

This sequence belongs to the KAE1 / TsaD family. Requires Fe(2+) as cofactor.

The protein localises to the cytoplasm. It carries out the reaction L-threonylcarbamoyladenylate + adenosine(37) in tRNA = N(6)-L-threonylcarbamoyladenosine(37) in tRNA + AMP + H(+). Required for the formation of a threonylcarbamoyl group on adenosine at position 37 (t(6)A37) in tRNAs that read codons beginning with adenine. Is involved in the transfer of the threonylcarbamoyl moiety of threonylcarbamoyl-AMP (TC-AMP) to the N6 group of A37, together with TsaE and TsaB. TsaD likely plays a direct catalytic role in this reaction. The chain is tRNA N6-adenosine threonylcarbamoyltransferase from Prosthecochloris aestuarii (strain DSM 271 / SK 413).